Reading from the N-terminus, the 142-residue chain is Large ribosomal subunit protein uL11 (142 aa).

It belongs to the universal ribosomal protein uL11 family. In terms of assembly, part of the ribosomal stalk of the 50S ribosomal subunit. Interacts with L10 and the large rRNA to form the base of the stalk. L10 forms an elongated spine to which L12 dimers bind in a sequential fashion forming a multimeric L10(L12)X complex. One or more lysine residues are methylated.

In terms of biological role, forms part of the ribosomal stalk which helps the ribosome interact with GTP-bound translation factors. In Shewanella loihica (strain ATCC BAA-1088 / PV-4), this protein is Large ribosomal subunit protein uL11.